The chain runs to 37 residues: Large ribosomal subunit protein bL36 (37 aa).

This sequence belongs to the bacterial ribosomal protein bL36 family.

The sequence is that of Large ribosomal subunit protein bL36 from Alkalilimnicola ehrlichii (strain ATCC BAA-1101 / DSM 17681 / MLHE-1).